A 737-amino-acid chain; its full sequence is MVKKRIYELAKELGISSERVIEIAKKYDFKVTNHMSALDENEQNKIRGSISLKAKKKEHIQHNKNKDNFHSKKVQKSNTGSKDENNHKNVHKNNRKRSGSSMKENNNAKNGQRNNRNNRSNNKFKNKRNNNNKRNNNFKKGNPVPPRKNKPLPETLVYTVGMNVADIAKKIHREPAEIIKKLFMMGVMVNQNQSLDKDTIELLAADYGINAEEKVEVDVSDIDKFFEEEQNNTEHLEKRPPVVTIMGHVDHGKTTLLDKLRHTHVTEGEAGGITQHIGAYQVRHDDKIITFLDTPGHAAFTNMRARGADITDITVLVVAADDGVMPQTIEAINHAKAAGVPIIVAVNKIDKPGANPNHVMEQLTEYELIPESWGGDTIFVEISAKFGKNLDELLDMILLEAEMLELHANPNQRGAGSVIEARLDKGKGSVASLLVQQGTLHVGDPIVVGNTFGRVRTMVDARGYDIKKATPATPVEITGLNEVPDSGDRFITFEDEKTARAAGEKRAERALLKERSQTNHVTLDNLFDTLKEGELKEVGVIIKADVQGSVEALAQSFKKIDVEGVRVNIIHQAVGAINESDVTLAEASNAIIVGFNVRPTPLAKQQAESDNVDIRLHRVIYKAIDEIETAMKGMLEPEYQEKITGQVEIRQTYKVSKLGTIGGGYVIDGYIRRDSGVRVIRDGIVIYEGKLASLKRFKDDVKEVKQGYECGLMIEKYNDIKVGDQIEAYIMEEVPVD.

The tract at residues 55–152 (KKKEHIQHNK…PVPPRKNKPL (98 aa)) is disordered. Residues 60 to 70 (IQHNKNKDNFH) show a composition bias toward basic and acidic residues. Over residues 88–98 (KNVHKNNRKRS) the composition is skewed to basic residues. The segment covering 105-121 (NNNAKNGQRNNRNNRSN) has biased composition (low complexity). The segment covering 122–131 (NKFKNKRNNN) has biased composition (basic residues). A compositionally biased stretch (low complexity) spans 132–142 (NKRNNNFKKGN). The 170-residue stretch at 238–407 (KRPPVVTIMG…LLEAEMLELH (170 aa)) folds into the tr-type G domain. The G1 stretch occupies residues 247–254 (GHVDHGKT). Residue 247-254 (GHVDHGKT) coordinates GTP. The segment at 272–276 (GITQH) is G2. Residues 293 to 296 (DTPG) form a G3 region. Residues 293-297 (DTPGH) and 347-350 (NKID) each bind GTP. The segment at 347-350 (NKID) is G4. Positions 383–385 (SAK) are G5.

It belongs to the TRAFAC class translation factor GTPase superfamily. Classic translation factor GTPase family. IF-2 subfamily.

It localises to the cytoplasm. One of the essential components for the initiation of protein synthesis. Protects formylmethionyl-tRNA from spontaneous hydrolysis and promotes its binding to the 30S ribosomal subunits. Also involved in the hydrolysis of GTP during the formation of the 70S ribosomal complex. This is Translation initiation factor IF-2 from Ligilactobacillus salivarius (strain UCC118) (Lactobacillus salivarius).